Here is a 117-residue protein sequence, read N- to C-terminus: ATP-dependent Clp protease adapter protein ClpS 1 (117 aa).

Residues 1–33 (MIAMPVRMQQGSEGDGGGPSRGTSVITRTKPKT) form a disordered region.

This sequence belongs to the ClpS family. In terms of assembly, binds to the N-terminal domain of the chaperone ClpA.

In terms of biological role, involved in the modulation of the specificity of the ClpAP-mediated ATP-dependent protein degradation. The protein is ATP-dependent Clp protease adapter protein ClpS 1 of Rhizobium meliloti (strain 1021) (Ensifer meliloti).